The sequence spans 250 residues: Recombination protein RecR (250 aa).

The segment at 56 to 71 adopts a C4-type zinc-finger fold; sequence CRICHNISQEDVCRIC. The 149-residue stretch at 79-227 folds into the Toprim domain; that stretch reads SIICVVEESK…TVTRLASGIP (149 aa). Positions 148–172 are disordered; that stretch reads LGDADTPADGESSGADAAETGNAKT.

The protein belongs to the RecR family.

In terms of biological role, may play a role in DNA repair. It seems to be involved in an RecBC-independent recombinational process of DNA repair. It may act with RecF and RecO. The chain is Recombination protein RecR from Corynebacterium jeikeium (strain K411).